The sequence spans 411 residues: Adenylosuccinate synthetase (411 aa).

GTP is bound by residues glycine 11–lysine 17 and glycine 39–threonine 41. Residue aspartate 12 is the Proton acceptor of the active site. Aspartate 12 and glycine 39 together coordinate Mg(2+). IMP-binding positions include aspartate 12–lysine 15, asparagine 37–histidine 40, threonine 121, arginine 135, glutamine 215, threonine 230, and arginine 294. The Proton donor role is filled by histidine 40. A substrate-binding site is contributed by threonine 290 to arginine 296. GTP is bound by residues arginine 296, lysine 322–aspartate 324, and serine 400–serine 402.

It belongs to the adenylosuccinate synthetase family. In terms of assembly, homodimer. It depends on Mg(2+) as a cofactor.

The protein localises to the cytoplasm. The catalysed reaction is IMP + L-aspartate + GTP = N(6)-(1,2-dicarboxyethyl)-AMP + GDP + phosphate + 2 H(+). The protein operates within purine metabolism; AMP biosynthesis via de novo pathway; AMP from IMP: step 1/2. Functionally, plays an important role in the de novo pathway of purine nucleotide biosynthesis. Catalyzes the first committed step in the biosynthesis of AMP from IMP. This is Adenylosuccinate synthetase from Helicobacter pylori (strain G27).